The primary structure comprises 315 residues: Mycothiol acetyltransferase (315 aa).

2 consecutive N-acetyltransferase domains span residues 4–141 and 152–315; these read LDWR…RPLR and VVIR…GTDN. Position 36 (glutamate 36) interacts with 1D-myo-inositol 2-(L-cysteinylamino)-2-deoxy-alpha-D-glucopyranoside. Residues 80–82 and 88–93 each bind acetyl-CoA; these read LVV and RRGIGT. 1D-myo-inositol 2-(L-cysteinylamino)-2-deoxy-alpha-D-glucopyranoside-binding residues include glutamate 179, lysine 224, and glutamate 234. Residues 238–240 and 245–251 contribute to the acetyl-CoA site; these read LGV and QRRGLGQ. Position 282 (tyrosine 282) interacts with 1D-myo-inositol 2-(L-cysteinylamino)-2-deoxy-alpha-D-glucopyranoside. 287 to 292 is an acetyl-CoA binding site; it reads NVAAVR.

The protein belongs to the acetyltransferase family. MshD subfamily. In terms of assembly, monomer.

The enzyme catalyses 1D-myo-inositol 2-(L-cysteinylamino)-2-deoxy-alpha-D-glucopyranoside + acetyl-CoA = mycothiol + CoA + H(+). Its function is as follows. Catalyzes the transfer of acetyl from acetyl-CoA to desacetylmycothiol (Cys-GlcN-Ins) to form mycothiol. In Mycobacterium bovis (strain ATCC BAA-935 / AF2122/97), this protein is Mycothiol acetyltransferase.